The following is a 156-amino-acid chain: uncharacterized protein (156 aa).

The segment covering 1–12 (MSSRFARSNGNP) has biased composition (polar residues). The tract at residues 1 to 27 (MSSRFARSNGNPNHIRKRNHSPDPIGI) is disordered. Residue S21 is modified to Phosphoserine.

Its subcellular location is the cytoplasm. It localises to the nucleus. This is an uncharacterized protein from Saccharomyces cerevisiae (strain ATCC 204508 / S288c) (Baker's yeast).